Consider the following 599-residue polypeptide: Elongation factor 4 (599 aa).

Positions lysine 2–glutamate 184 constitute a tr-type G domain. Residues aspartate 14–threonine 19 and asparagine 131–aspartate 134 each bind GTP.

The protein belongs to the TRAFAC class translation factor GTPase superfamily. Classic translation factor GTPase family. LepA subfamily.

Its subcellular location is the cell inner membrane. The catalysed reaction is GTP + H2O = GDP + phosphate + H(+). Functionally, required for accurate and efficient protein synthesis under certain stress conditions. May act as a fidelity factor of the translation reaction, by catalyzing a one-codon backward translocation of tRNAs on improperly translocated ribosomes. Back-translocation proceeds from a post-translocation (POST) complex to a pre-translocation (PRE) complex, thus giving elongation factor G a second chance to translocate the tRNAs correctly. Binds to ribosomes in a GTP-dependent manner. The protein is Elongation factor 4 of Erwinia tasmaniensis (strain DSM 17950 / CFBP 7177 / CIP 109463 / NCPPB 4357 / Et1/99).